The primary structure comprises 319 residues: GATA transcription factor 18 (319 aa).

Positions 1–15 (MPDAAAAAAAAQDAD) are enriched in low complexity. A disordered region spans residues 1-74 (MPDAAAAAAA…AAPEPVSALL (74 aa)). A compositionally biased stretch (acidic residues) spans 31-60 (DNDDDDGDDGTEEDEEEDDDEEGDEEELPP). The 36-residue stretch at 74-109 (LPGSPNQLTLLFQGEVYVFESVTPEKVQAVLLLLGR) folds into the Tify domain. Positions 143–185 (RVASLIRFREKRKERNFDKKIRYAVRKEVALRMQRRKGQFAGR) constitute a CCT domain. The GATA-type zinc-finger motif lies at 215–242 (CQNCGTSEKMTPAMRRGPAGPRTLCNAC). The interval 292-319 (ITASHGEVMGDSTPANEAEIGAPKAQSQ) is disordered.

It belongs to the type IV zinc-finger family. Class C subfamily.

It is found in the nucleus. Its function is as follows. Transcriptional activator that specifically binds 5'-GATA-3' or 5'-GAT-3' motifs within gene promoters. In Oryza sativa subsp. japonica (Rice), this protein is GATA transcription factor 18.